The chain runs to 624 residues: Anti-CBASS protein Acb1 (624 aa).

Tyr-106 lines the 3',3'-cGAMP pocket. Tyr-106 is a binding site for 3',3'-cUAMP. Active-site residues include His-503, Thr-505, His-581, and Thr-583. Trp-617 is a binding site for 3',3'-cGAMP. Trp-617 serves as a coordination point for 3',3'-cUAMP.

It belongs to the anti-CBASS protein Acb1 family.

The enzyme catalyses 3',3'-cUAMP + H2O = U[3'-5']pAp[3'] + H(+). It carries out the reaction 3',3',3'-c-tri-AMP + H2O = A[3'-5']pA[3'-5']pAp[3'] + H(+). The catalysed reaction is 3',3',3'-cAAG + H2O = G[3'-5']pA[3'-5']pAp[3'] + H(+). It catalyses the reaction 3',3',3'-cAAG + H2O = A[3'-5']pG[3'-5']pAp[3'] + H(+). The enzyme catalyses 3',3'-cGAMP + H2O = G[3'-5']pAp[3'] + H(+). Its function is as follows. Counteracts or regulates the endogenous CBASS antiviral defense system. Phosphodiesterase that enables metal-independent hydrolysis of the host cyclic di- and trinucleotide CBASS signals such as 3'3'-cGAMP, 3'3'cUA, and 3'3'3'-cAAA. This is Anti-CBASS protein Acb1 from Sphingomonas paeninsulae.